We begin with the raw amino-acid sequence, 313 residues long: Cytosolic Fe-S cluster assembly factor NUBP1 homolog (313 aa).

Residues 1–25 (MSDVPEDANAGCPGTGSAGAGKASG) form a disordered region. [4Fe-4S] cluster-binding residues include C12, C26, C29, and C35. 66-73 (GKGGVGKS) provides a ligand contact to ATP. [4Fe-4S] cluster is bound by residues C240 and C243.

The protein belongs to the Mrp/NBP35 ATP-binding proteins family. NUBP1/NBP35 subfamily. Heterotetramer of 2 NUBP1 and 2 NUBP2 chains. The cofactor is [4Fe-4S] cluster.

It is found in the cytoplasm. The protein resides in the cell projection. Its function is as follows. Component of the cytosolic iron-sulfur (Fe/S) protein assembly (CIA) machinery. Required for maturation of extramitochondrial Fe-S proteins. The NUBP1-NUBP2 heterotetramer forms a Fe-S scaffold complex, mediating the de novo assembly of an Fe-S cluster and its transfer to target apoproteins. Regulates cilium formation and structure. In Caenorhabditis briggsae, this protein is Cytosolic Fe-S cluster assembly factor NUBP1 homolog.